Here is a 348-residue protein sequence, read N- to C-terminus: Nicotinate-nucleotide pyrophosphorylase [carboxylating], chloroplastic (348 aa).

The transit peptide at 1–41 (MISVSRFLSPQFYAIPRSFVKMSASATQTAGEVSMGIKPPS) directs the protein to the chloroplast. Substrate contacts are provided by residues arginine 139, 170-172 (TRK), arginine 194, lysine 204, glutamate 237, aspartate 264, 296-298 (SGN), and 317-319 (SGA).

Belongs to the NadC/ModD family.

Its subcellular location is the plastid. It is found in the chloroplast. The enzyme catalyses nicotinate beta-D-ribonucleotide + CO2 + diphosphate = quinolinate + 5-phospho-alpha-D-ribose 1-diphosphate + 2 H(+). It participates in cofactor biosynthesis; NAD(+) biosynthesis; nicotinate D-ribonucleotide from quinolinate: step 1/1. Its function is as follows. Involved in the biosynthesis of NAD(+). Catalyzes the conversion of quinolate to nicotinate to nicotinate beta-D-ribonucleotide. The chain is Nicotinate-nucleotide pyrophosphorylase [carboxylating], chloroplastic from Arabidopsis thaliana (Mouse-ear cress).